The primary structure comprises 115 residues: Large ribosomal subunit protein bL19 (115 aa).

It belongs to the bacterial ribosomal protein bL19 family.

Functionally, this protein is located at the 30S-50S ribosomal subunit interface and may play a role in the structure and function of the aminoacyl-tRNA binding site. This Brevibacillus brevis (strain 47 / JCM 6285 / NBRC 100599) protein is Large ribosomal subunit protein bL19.